We begin with the raw amino-acid sequence, 306 residues long: Low density lipoprotein receptor adapter protein 1 (306 aa).

Met1 is modified (N-acetylmethionine). Residue Ser14 is modified to Phosphoserine. One can recognise a PID domain in the interval 44–168 (GMVFSLKYLG…VAQAFKVAFE (125 aa)). The disordered stretch occupies residues 178-204 (EKREKANQEGGDVPGTRRDSTPSLKTS). Ser197 and Ser200 each carry phosphoserine. The Clathrin box motif lies at 210-214 (LLDLE). The interval 247 to 274 (WELDDGLDEAFSRLAQSRTNPQVLDTGL) is AP-2 complex binding. The [DE]-X(1,2)-F-X-X-[FL]-X-X-X-R motif signature appears at 255–264 (EAFSRLAQSR).

In terms of assembly, interacts (via PID domain) with LDLR (via NPXY motifs). Binds to soluble clathrin trimers. Interacts with AP2B1; the interaction mediates the association with the AP-2 complex. Interacts with VLDLR. Interacts with LRP2.

It is found in the cytoplasm. Adapter protein (clathrin-associated sorting protein (CLASP)) required for efficient endocytosis of the LDL receptor (LDLR) in polarized cells such as hepatocytes and lymphocytes, but not in non-polarized cells (fibroblasts). May be required for LDL binding and internalization but not for receptor clustering in coated pits. May facilitate the endocytosis of LDLR and LDLR-LDL complexes from coated pits by stabilizing the interaction between the receptor and the structural components of the pits. May also be involved in the internalization of other LDLR family members. Binds to phosphoinositides, which regulate clathrin bud assembly at the cell surface. Required for trafficking of LRP2 to the endocytic recycling compartment which is necessary for LRP2 proteolysis, releasing a tail fragment which translocates to the nucleus and mediates transcriptional repression. The sequence is that of Low density lipoprotein receptor adapter protein 1 from Rattus norvegicus (Rat).